The chain runs to 528 residues: GMP synthase [glutamine-hydrolyzing] (528 aa).

The region spanning 13–204 (AIVILDFGSQ…VYHICGCEPD (192 aa)) is the Glutamine amidotransferase type-1 domain. Residue Cys-90 is the Nucleophile of the active site. Residues His-178 and Glu-180 contribute to the active site. Residues 205–403 (WTTSAFIDEA…LGLPEEIVRR (199 aa)) enclose the GMPS ATP-PPase domain. 232–238 (SGGVDSS) is a binding site for ATP.

As to quaternary structure, homodimer.

The enzyme catalyses XMP + L-glutamine + ATP + H2O = GMP + L-glutamate + AMP + diphosphate + 2 H(+). It functions in the pathway purine metabolism; GMP biosynthesis; GMP from XMP (L-Gln route): step 1/1. In terms of biological role, catalyzes the synthesis of GMP from XMP. This Parasynechococcus marenigrum (strain WH8102) protein is GMP synthase [glutamine-hydrolyzing].